Consider the following 2690-residue polypeptide: Probable polyketide synthase 28 (2690 aa).

Residues 15 to 443 (YGDVAVIGIG…GSNVCLILSE (429 aa)) enclose the Ketosynthase family 3 (KS3) domain. Active-site for beta-ketoacyl synthase activity residues include Cys187, His326, and His366. An acyl/malonyl transferases region spans residues 651–684 (GVSADIIVGHSLGELSSSYSSGMIDFETLCHLIY). Ser661 (for acyl/malonyl transferase activity) is an active-site residue. A coiled-coil region spans residues 906 to 934 (NFKSQLTNINNNNNNINNNNNNNNNNNNN). Positions 916 to 946 (NNNNNINNNNNNNNNNNNNNNNNNNNNNNNN) are disordered. The N-terminal hotdog fold stretch occupies residues 973–1102 (HEKITNEGPS…GNFSLFKHNS (130 aa)). Residues 973–1285 (HEKITNEGPS…CSSVSLANPS (313 aa)) form the PKS/mFAS DH domain. His1014 serves as the catalytic Proton acceptor; for dehydratase activity. Residues 1119–1285 (NFTTISKHDF…CSSVSLANPS (167 aa)) are C-terminal hotdog fold. Asp1188 serves as the catalytic Proton donor; for dehydratase activity. The interval 1401 to 1429 (LNHHNNSENKNKNNNNNNNSNNNENSNNE) is disordered. Positions 1412–1429 (KNNNNNNNSNNNENSNNE) are enriched in low complexity. The 78-residue stretch at 2594 to 2671 (SDNEFIHSTI…QSIDIIKFGY (78 aa)) folds into the Carrier domain. Ser2631 carries the post-translational modification O-(pantetheine 4'-phosphoryl)serine.

Pantetheine 4'-phosphate is required as a cofactor.

Its function is as follows. Probable polyketide synthase. In Dictyostelium discoideum (Social amoeba), this protein is Probable polyketide synthase 28 (pks28).